Consider the following 306-residue polypeptide: Nucleotide-binding protein amb4396 (306 aa).

Residues 1 to 14 (MSDLHSSPTDQTSA) are compositionally biased toward polar residues. The segment at 1 to 20 (MSDLHSSPTDQTSAPAHAGG) is disordered. 29–36 (GMSGAGKT) serves as a coordination point for ATP. 77–80 (DIRT) is a binding site for GTP.

The protein belongs to the RapZ-like family.

Displays ATPase and GTPase activities. In Paramagnetospirillum magneticum (strain ATCC 700264 / AMB-1) (Magnetospirillum magneticum), this protein is Nucleotide-binding protein amb4396.